The sequence spans 493 residues: Glutamyl-tRNA(Gln) amidotransferase subunit A (493 aa).

Catalysis depends on charge relay system residues lysine 79 and serine 159. Catalysis depends on serine 183, which acts as the Acyl-ester intermediate.

It belongs to the amidase family. GatA subfamily. In terms of assembly, heterotrimer of A, B and C subunits.

The enzyme catalyses L-glutamyl-tRNA(Gln) + L-glutamine + ATP + H2O = L-glutaminyl-tRNA(Gln) + L-glutamate + ADP + phosphate + H(+). In terms of biological role, allows the formation of correctly charged Gln-tRNA(Gln) through the transamidation of misacylated Glu-tRNA(Gln) in organisms which lack glutaminyl-tRNA synthetase. The reaction takes place in the presence of glutamine and ATP through an activated gamma-phospho-Glu-tRNA(Gln). The sequence is that of Glutamyl-tRNA(Gln) amidotransferase subunit A from Rhizobium johnstonii (strain DSM 114642 / LMG 32736 / 3841) (Rhizobium leguminosarum bv. viciae).